The primary structure comprises 151 residues: Transcriptional regulator MraZ (151 aa).

SpoVT-AbrB domains follow at residues 5 to 52 (ANAI…PLDE) and 81 to 124 (AVDL…DEDA).

Belongs to the MraZ family. In terms of assembly, forms oligomers.

Its subcellular location is the cytoplasm. It localises to the nucleoid. This is Transcriptional regulator MraZ from Pseudomonas fluorescens (strain SBW25).